We begin with the raw amino-acid sequence, 169 residues long: Probable calcium-binding protein CML13 (169 aa).

The disordered stretch occupies residues 1-26 (MSTVKGQTRRERPRGARPHGLTKQKR). The segment covering 15-24 (GARPHGLTKQ) has biased composition (basic residues). EF-hand domains lie at 24–59 (QKRQ…LGFE), 60–95 (MTEE…KIGE), 97–132 (DSKE…LGEN), and 133–168 (FTYQ…TGYG). Ca(2+) is bound by residues aspartate 37, aspartate 39, serine 41, threonine 43, glutamate 48, aspartate 73, aspartate 75, serine 77, serine 79, glutamate 84, aspartate 110, aspartate 112, asparagine 114, lysine 116, aspartate 121, aspartate 146, asparagine 148, aspartate 150, glutamate 152, and glutamate 157.

Potential calcium sensor. The sequence is that of Probable calcium-binding protein CML13 (CML13) from Oryza sativa subsp. japonica (Rice).